Here is a 248-residue protein sequence, read N- to C-terminus: Large ribosomal subunit protein uL30 (248 aa).

The interval 22–42 is disordered; that stretch reads KSQEKARAERQAEIEKKKAAN. Positions 24–42 are enriched in basic and acidic residues; the sequence is QEKARAERQAEIEKKKAAN.

It belongs to the universal ribosomal protein uL30 family. In terms of assembly, component of the large ribosomal subunit (LSU). Mature N.crassa ribosomes consist of a small (40S) and a large (60S) subunit. The 40S small subunit contains 1 molecule of ribosomal RNA (18S rRNA) and at least 32 different proteins. The large 60S subunit contains 3 rRNA molecules (26S, 5.8S and 5S rRNA) and at least 42 different proteins.

It is found in the cytoplasm. In terms of biological role, component of the ribosome, a large ribonucleoprotein complex responsible for the synthesis of proteins in the cell. The small ribosomal subunit (SSU) binds messenger RNAs (mRNAs) and translates the encoded message by selecting cognate aminoacyl-transfer RNA (tRNA) molecules. The large subunit (LSU) contains the ribosomal catalytic site termed the peptidyl transferase center (PTC), which catalyzes the formation of peptide bonds, thereby polymerizing the amino acids delivered by tRNAs into a polypeptide chain. The nascent polypeptides leave the ribosome through a tunnel in the LSU and interact with protein factors that function in enzymatic processing, targeting, and the membrane insertion of nascent chains at the exit of the ribosomal tunnel. The sequence is that of Large ribosomal subunit protein uL30 (rpl-7) from Neurospora crassa (strain ATCC 24698 / 74-OR23-1A / CBS 708.71 / DSM 1257 / FGSC 987).